The following is a 643-amino-acid chain: Threonine--tRNA ligase (643 aa).

One can recognise a TGS domain in the interval Met1 to Thr61. The tract at residues Asp243 to Pro534 is catalytic. Residues Cys334, His385, and His511 each contribute to the Zn(2+) site.

This sequence belongs to the class-II aminoacyl-tRNA synthetase family. As to quaternary structure, homodimer. Requires Zn(2+) as cofactor.

Its subcellular location is the cytoplasm. The enzyme catalyses tRNA(Thr) + L-threonine + ATP = L-threonyl-tRNA(Thr) + AMP + diphosphate + H(+). In terms of biological role, catalyzes the attachment of threonine to tRNA(Thr) in a two-step reaction: L-threonine is first activated by ATP to form Thr-AMP and then transferred to the acceptor end of tRNA(Thr). Also edits incorrectly charged L-seryl-tRNA(Thr). This chain is Threonine--tRNA ligase, found in Haemophilus influenzae (strain PittGG).